Consider the following 180-residue polypeptide: tRNA (cytidine(56)-2'-O)-methyltransferase (180 aa).

S-adenosyl-L-methionine is bound by residues L85, 114–118 (GAEKV), and 132–139 (VGNQPHSE).

It belongs to the aTrm56 family. Homodimer.

It localises to the cytoplasm. The enzyme catalyses cytidine(56) in tRNA + S-adenosyl-L-methionine = 2'-O-methylcytidine(56) in tRNA + S-adenosyl-L-homocysteine + H(+). Functionally, specifically catalyzes the AdoMet-dependent 2'-O-ribose methylation of cytidine at position 56 in tRNAs. The polypeptide is tRNA (cytidine(56)-2'-O)-methyltransferase (Thermococcus kodakarensis (strain ATCC BAA-918 / JCM 12380 / KOD1) (Pyrococcus kodakaraensis (strain KOD1))).